Here is a 216-residue protein sequence, read N- to C-terminus: Nucleoid occlusion factor SlmA (216 aa).

Residues 1–23 form a disordered region; it reads MAEQLTLDSIEPEPEKQSAKIEK. Positions 13-23 are enriched in basic and acidic residues; the sequence is EPEKQSAKIEK. The region spanning 28-88 is the HTH tetR-type domain; sequence ERRQQVLTVL…ALIENIESSL (61 aa). The H-T-H motif DNA-binding region spans 51–70; the sequence is TTARLAKEVGVSEAALYRYF.

It belongs to the nucleoid occlusion factor SlmA family. Homodimer. Interacts with FtsZ.

The protein localises to the cytoplasm. Its subcellular location is the nucleoid. Its function is as follows. Required for nucleoid occlusion (NO) phenomenon, which prevents Z-ring formation and cell division over the nucleoid. Acts as a DNA-associated cell division inhibitor that binds simultaneously chromosomal DNA and FtsZ, and disrupts the assembly of FtsZ polymers. SlmA-DNA-binding sequences (SBS) are dispersed on non-Ter regions of the chromosome, preventing FtsZ polymerization at these regions. The protein is Nucleoid occlusion factor SlmA of Mannheimia succiniciproducens (strain KCTC 0769BP / MBEL55E).